Here is a 109-residue protein sequence, read N- to C-terminus: Defensin-B5 (109 aa).

The signal sequence occupies residues 1–20 (MRGLLPFLFLLSFFLSPIQA). The disordered stretch occupies residues 21–44 (QPEGREEELEETWSEDRDQAPPRV). Positions 21–70 (QPEGREEELEETWSEDRDQAPPRVVEESEVVGAENEAGLAAGRSYPWIIL) are excised as a propeptide. The segment covering 34–44 (SEDRDQAPPRV) has biased composition (basic and acidic residues). 3 cysteine pairs are disulfide-bonded: cysteine 73–cysteine 101, cysteine 80–cysteine 95, and cysteine 85–cysteine 102. A propeptide spanning residues 107–109 (AVP) is cleaved from the precursor.

Belongs to the beta-defensin family. In terms of tissue distribution, highly expressed in kidney, and expressed at lower levels in testis.

Its subcellular location is the secreted. In terms of biological role, has antimicrobial activity. In Ornithorhynchus anatinus (Duckbill platypus), this protein is Defensin-B5.